Here is a 344-residue protein sequence, read N- to C-terminus: Lipase chaperone (344 aa).

The helical transmembrane segment at 14–34 threads the bilayer; sequence AVVYGVVGLAAIAGVAMWSGA.

Belongs to the lipase chaperone family.

The protein localises to the cell inner membrane. In terms of biological role, may be involved in the folding of the extracellular lipase during its passage through the periplasm. This chain is Lipase chaperone (lifO), found in Burkholderia cepacia (Pseudomonas cepacia).